We begin with the raw amino-acid sequence, 255 residues long: Phosphatidylglycerol--prolipoprotein diacylglyceryl transferase (255 aa).

3 consecutive transmembrane segments (helical) span residues 15 to 35, 46 to 66, and 84 to 104; these read WYGI…NLNC, IDVF…YYVV, and LGGL…YIVS. Arg130 lines the a 1,2-diacyl-sn-glycero-3-phospho-(1'-sn-glycerol) pocket. A run of 3 helical transmembrane segments spans residues 169 to 189, 196 to 216, and 228 to 248; these read PTFL…VYIF, GTVI…IEGL, and VAQL…VYLK.

Belongs to the Lgt family.

The protein resides in the cell membrane. It catalyses the reaction L-cysteinyl-[prolipoprotein] + a 1,2-diacyl-sn-glycero-3-phospho-(1'-sn-glycerol) = an S-1,2-diacyl-sn-glyceryl-L-cysteinyl-[prolipoprotein] + sn-glycerol 1-phosphate + H(+). Its pathway is protein modification; lipoprotein biosynthesis (diacylglyceryl transfer). Functionally, catalyzes the transfer of the diacylglyceryl group from phosphatidylglycerol to the sulfhydryl group of the N-terminal cysteine of a prolipoprotein, the first step in the formation of mature lipoproteins. This chain is Phosphatidylglycerol--prolipoprotein diacylglyceryl transferase, found in Clostridium kluyveri (strain NBRC 12016).